The primary structure comprises 328 residues: Methionyl-tRNA formyltransferase (328 aa).

Position 110 to 113 (Ser110 to Pro113) interacts with (6S)-5,6,7,8-tetrahydrofolate.

Belongs to the Fmt family.

It catalyses the reaction L-methionyl-tRNA(fMet) + (6R)-10-formyltetrahydrofolate = N-formyl-L-methionyl-tRNA(fMet) + (6S)-5,6,7,8-tetrahydrofolate + H(+). In terms of biological role, attaches a formyl group to the free amino group of methionyl-tRNA(fMet). The formyl group appears to play a dual role in the initiator identity of N-formylmethionyl-tRNA by promoting its recognition by IF2 and preventing the misappropriation of this tRNA by the elongation apparatus. This chain is Methionyl-tRNA formyltransferase, found in Prochlorococcus marinus subsp. pastoris (strain CCMP1986 / NIES-2087 / MED4).